The primary structure comprises 724 residues: Probable protein phosphatase 2C 62 (724 aa).

Residues 357–385 (DELISTSEATRHSVDEIAQKPIIDTSEKN) form a disordered region. Positions 365 to 374 (ATRHSVDEIA) are enriched in basic and acidic residues. Positions 482-719 (DSGFASLQSP…DAVTVIISFV (238 aa)) constitute a PPM-type phosphatase domain. Mn(2+)-binding residues include Asp-514, Gly-515, Asp-643, and Asp-710.

The protein belongs to the PP2C family. Mg(2+) is required as a cofactor. The cofactor is Mn(2+).

It carries out the reaction O-phospho-L-seryl-[protein] + H2O = L-seryl-[protein] + phosphate. The catalysed reaction is O-phospho-L-threonyl-[protein] + H2O = L-threonyl-[protein] + phosphate. The sequence is that of Probable protein phosphatase 2C 62 from Arabidopsis thaliana (Mouse-ear cress).